We begin with the raw amino-acid sequence, 567 residues long: Multidrug and toxin extrusion protein 1 (567 aa).

At methionine 1 the chain carries N-acetylmethionine. Residues 1–37 (MERTEESAPGPGGADAASERRGLRCLLLPGFLEELRA) are Cytoplasmic-facing. Serine 18 bears the Phosphoserine mark. A helical transmembrane segment spans residues 38–58 (LLVLAGPAFLAQLMMFLISFI). Residues 59–72 (SSVFCGHLGKLELD) lie on the Extracellular side of the membrane. The helical transmembrane segment at 73-93 (AVTLAIAVINVTGISVGHGLS) threads the bilayer. At 94–120 (SACDTLISQTYGSQNLKHVGVILQRGT) the chain is on the cytoplasmic side. A helical membrane pass occupies residues 121 to 141 (LILLLCCFPCWALFINTEQIL). At 142-152 (LLFRQDPDVSR) the chain is on the extracellular side. The chain crosses the membrane as a helical span at residues 153-173 (LTQTYVMIFIPALPAAFLYTL). Topologically, residues 174 to 187 (QVKYLLNQGIVLPQ) are cytoplasmic. A helical transmembrane segment spans residues 188 to 208 (IMTGIAANLVNALANYVFLYH). At 209–216 (LHLGVMGS) the chain is on the extracellular side. A helical transmembrane segment spans residues 217 to 237 (ALANTISQFALAIFLFLYILW). Over 238–257 (RRLHQATWGGWSWECLQDWA) the chain is Cytoplasmic. Residues 258 to 277 (SFLRLAIPSMLMLCIEWWAY) form a helical membrane-spanning segment. Topologically, residues 278-295 (EVGSFLSGILGMVELGAQ) are extracellular. A helical transmembrane segment spans residues 296–316 (SITYELAIIVYMIPSGFSVAA). The Cytoplasmic segment spans residues 317–336 (NVRVGNALGAGNIDQAKKSS). The helical transmembrane segment at 337–357 (AISLIVTELFAVTFCVLLLGC) threads the bilayer. The Extracellular segment spans residues 358–370 (KDLVGYIFTTDRD). Residues 371–391 (IVALVAQVIPIYAVSHLFEGL) form a helical membrane-spanning segment. Topologically, residues 392–408 (ACTCGGILRGTGNQKVG) are cytoplasmic. Residues 409-429 (AIVNAIGYYVIGLPIGIALMF) form a helical membrane-spanning segment. The Extracellular segment spans residues 430-437 (AAKLGVIG). The helical transmembrane segment at 438–458 (LWSGIIICTTCQTTCFLAFIA) threads the bilayer. Residues 459-543 (RLNWKRACQQ…LSGKQLALRR (85 aa)) are Cytoplasmic-facing. A helical membrane pass occupies residues 544-564 (GLLLLGVVLVLVGGILVRVYI). Residues 565-567 (RIE) lie on the Extracellular side of the membrane.

Belongs to the multi antimicrobial extrusion (MATE) (TC 2.A.66.1) family. In terms of tissue distribution, predominantly expressed in kidney and liver. Also expressed in various cells, including brain glia-like cells and capillaries, pancreatic duct cells, urinary bladder epithelium, adrenal gland cortex, heart, stomach, small intestine, thyroid gland, testes, alpha cells of the islets of Langerhans, Leydig cells, and vitamin A-storing Ito cells. Expressed in heart, stomach, small intestine, bladder, thyroid gland, adrenal gland and testes (at protein level).

The protein resides in the cell membrane. The protein localises to the apical cell membrane. It carries out the reaction thiamine(out) + H(+)(in) = thiamine(in) + H(+)(out). The catalysed reaction is estrone 3-sulfate(in) + H(+)(out) = estrone 3-sulfate(out) + H(+)(in). The enzyme catalyses creatinine(in) + H(+)(out) = creatinine(out) + H(+)(in). It catalyses the reaction agmatine(in) + H(+)(out) = agmatine(out) + H(+)(in). Its function is as follows. Multidrug efflux pump that functions as a H(+)/organic cation antiporter. Plays a physiological role in the excretion of cationic compounds including endogenous metabolites, drugs, toxins through the kidney and liver, into urine and bile respectively. Mediates the efflux of endogenous compounds such as creatinine, vitamin B1/thiamine, agmatine and estrone-3-sulfate. May also contribute to regulate the transport of cationic compounds in testis across the blood-testis-barrier. This chain is Multidrug and toxin extrusion protein 1 (Slc47a1), found in Mus musculus (Mouse).